A 203-amino-acid chain; its full sequence is dITP/XTP pyrophosphatase (203 aa).

9–14 (SSNAGK) provides a ligand contact to substrate. Residues glutamate 42 and aspartate 72 each contribute to the Mg(2+) site. The Proton acceptor role is filled by aspartate 72. Substrate is bound by residues serine 73, 161–164 (FGYD), lysine 184, and 189–190 (HR).

The protein belongs to the HAM1 NTPase family. In terms of assembly, homodimer. It depends on Mg(2+) as a cofactor.

It carries out the reaction XTP + H2O = XMP + diphosphate + H(+). The enzyme catalyses dITP + H2O = dIMP + diphosphate + H(+). The catalysed reaction is ITP + H2O = IMP + diphosphate + H(+). Functionally, pyrophosphatase that catalyzes the hydrolysis of nucleoside triphosphates to their monophosphate derivatives, with a high preference for the non-canonical purine nucleotides XTP (xanthosine triphosphate), dITP (deoxyinosine triphosphate) and ITP. Seems to function as a house-cleaning enzyme that removes non-canonical purine nucleotides from the nucleotide pool, thus preventing their incorporation into DNA/RNA and avoiding chromosomal lesions. In Acidobacterium capsulatum (strain ATCC 51196 / DSM 11244 / BCRC 80197 / JCM 7670 / NBRC 15755 / NCIMB 13165 / 161), this protein is dITP/XTP pyrophosphatase.